The sequence spans 397 residues: MKEKVVLAYSGGLDTSIIIPWLKENYDLDVIAVCVNVGQGDDMDYVKTKAIKSGASKIYVEDVKEEFVVDYLYKAIKSEALYEQDYMLGTSFARPLMAKKLVEIAHKEQAKYICHGCTGKGNDQVRFEVGVKAQDPTIKIIAPWRIWDIKSREDAIDYAKKVGVEVPVTKKKIYSVDKNLWHVSHEGGDLEDLKNEHKEDMYFMVTPPEKAKDEPTYLEIYFEKGAPVKINGEVLNPVDIIDKLNTIGGENGIGIADIIENRLVGMKSRGIYETPAGTLLYAAHKKLESVTLDKYTYQYKKIVSAQYGELVYNGLWFTSLREAIDAFVDKTQENVTGTVQLKLYKGNIKPCSVDTEYALYDEGISSFGESELYSHKDAEGFINLFGLPSKIKALKNF.

An ATP-binding site is contributed by 8–16 (AYSGGLDTS). Positions 86 and 91 each coordinate L-citrulline. An ATP-binding site is contributed by G116. Positions 118, 122, and 123 each coordinate L-aspartate. Position 122 (N122) interacts with L-citrulline. L-citrulline contacts are provided by R126, S175, S184, E260, and Y272.

Belongs to the argininosuccinate synthase family. Type 1 subfamily. In terms of assembly, homotetramer.

It localises to the cytoplasm. It catalyses the reaction L-citrulline + L-aspartate + ATP = 2-(N(omega)-L-arginino)succinate + AMP + diphosphate + H(+). The protein operates within amino-acid biosynthesis; L-arginine biosynthesis; L-arginine from L-ornithine and carbamoyl phosphate: step 2/3. The sequence is that of Argininosuccinate synthase from Clostridium botulinum (strain ATCC 19397 / Type A).